We begin with the raw amino-acid sequence, 110 residues long: MVRTKANYVPGAYRKAVASQAPRKVLGSSTFVTNSSSSSRKAENKYAGGNPVCVRPTPKWQKGIGEFFRLSPKESKKENQAPEEAGTSGLGKAKRKACPLQPDHRDDENE.

Lysine 15 participates in a covalent cross-link: Glycyl lysine isopeptide (Lys-Gly) (interchain with G-Cter in ubiquitin). Residues 23 to 34 (RKVLGSSTFVTN) carry the D-box motif. Position 24 is an N6-acetyllysine; alternate (lysine 24). Lysine 24 participates in a covalent cross-link: Glycyl lysine isopeptide (Lys-Gly) (interchain with G-Cter in ubiquitin); alternate. A phosphoserine mark is found at serine 28 and serine 71. Positions 28 to 39 (SSTFVTNSSSSS) are enriched in low complexity. A disordered region spans residues 28–110 (SSTFVTNSSS…QPDHRDDENE (83 aa)). Residues 61-71 (QKGIGEFFRLS) carry the PIP-box motif. The segment covering 71–80 (SPKESKKENQ) has biased composition (basic and acidic residues). Residues 77–79 (KEN) carry the KEN box motif. The Initiation motif signature appears at 84-96 (EAGTSGLGKAKRK).

Interacts (when monoubiquitinated at Lys-15 and Lys-24) with PCNA. Interacts with isoform 2/p33ING1b of ING1. Interacts with BRCA1. In terms of processing, monoubiquitinated at Lys-15 and Lys-24 during normal S phase, promoting its association with PCNA. Also diubiquitinated at these 2 sites. Following DNA damage, monoubiquitin chains at Lys-15 and Lys-24 are probably extended, leading to disrupt the interaction with PCNA. Polyubiquitinated by the APC/C complex at the mitotic exit, leading to its degradation by the proteasome.

It localises to the nucleus. It is found in the cytoplasm. Its subcellular location is the perinuclear region. Its function is as follows. PCNA-binding protein that acts as a regulator of DNA repair during DNA replication. Following DNA damage, the interaction with PCNA is disrupted, facilitating the interaction between monoubiquitinated PCNA and the translesion DNA synthesis DNA polymerase eta (POLH) at stalled replisomes, facilitating the bypass of replication-fork-blocking lesions. Also acts as a regulator of centrosome number. The polypeptide is PCNA-associated factor (Mus musculus (Mouse)).